Here is a 208-residue protein sequence, read N- to C-terminus: MEFSMKFNATARSVQGSSASRRLRRAGRVPAIVYGGTAAPLNIELDHNEIYHALRKEEFHALILNMVIEGGKTEEVLLRSVQWHAYKPQVMHVDFQRVEANQALHTKVPLHFINAEVSPAVKLSGAIISHVLTELDITCLPALLPQFIEVNLGDLLGGGSIHLADIKLPKGVTFNAHGGDTNPLIAAAVVKGGGAADEGDAAAEQPAA.

The protein belongs to the bacterial ribosomal protein bL25 family. CTC subfamily. Part of the 50S ribosomal subunit; part of the 5S rRNA/L5/L18/L25 subcomplex. Contacts the 5S rRNA. Binds to the 5S rRNA independently of L5 and L18.

In terms of biological role, this is one of the proteins that binds to the 5S RNA in the ribosome where it forms part of the central protuberance. This Bordetella pertussis (strain Tohama I / ATCC BAA-589 / NCTC 13251) protein is Large ribosomal subunit protein bL25.